Here is a 536-residue protein sequence, read N- to C-terminus: Small conductance calcium-activated potassium channel protein 1 (536 aa).

The disordered stretch occupies residues 1-90; it reads MSSRSHNGSV…KPPTVSHRLG (90 aa). A compositionally biased stretch (acidic residues) spans 65-75; it reads QEEEEEEEDED. A helical transmembrane segment spans residues 107-127; it reads LIFGMFGIVVMVTETELSWGV. Residues 136-156 form a helical membrane-spanning segment; that stretch reads FALKCLISLSTVILLGLVILY. Residues 224-244 traverse the membrane as a helical segment; the sequence is VLLSIPMFLRLYLLARVMLLH. Residues 273 to 293 traverse the membrane as a helical segment; the sequence is LMTICPGTVLLVFSISSWIVA. The helical transmembrane segment at 313–333 threads the bilayer; the sequence is FLGAMWLISITFLSIGYGDMV. The segment at residues 342–362 is an intramembrane region (pore-forming); it reads VCLLTGIMGAGCTALVVAVVA. The segment at 380 to 459 is calmodulin-binding; the sequence is DTQLTKRVKN…LADLAKAQSI (80 aa). A helical membrane pass occupies residues 487–507; that stretch reads VLGASLQALPSLIAQAICPLP. Positions 514–536 are disordered; sequence SHLTTAAQSPQSHWLPTTASDCG. Positions 515–536 are enriched in polar residues; that stretch reads HLTTAAQSPQSHWLPTTASDCG.

This sequence belongs to the potassium channel KCNN family. KCa2.1/KCNN1 subfamily. Homodimer. Heteromultimer with KCNN2 and KCNN3. The complex is composed of 4 channel subunits each of which binds to a calmodulin subunit which regulates the channel activity through calcium-binding. Interacts with calmodulin. As to expression, widely expressed including brain.

It localises to the membrane. The protein resides in the cytoplasm. The protein localises to the myofibril. Its subcellular location is the sarcomere. It is found in the z line. The enzyme catalyses K(+)(in) = K(+)(out). Inhibited by bee venom neurotoxin apamin. Inhibited by d-tubocurarine and tetraethylammonium (TEA). Its function is as follows. Small conductance calcium-activated potassium channel that mediates the voltage-independent transmembrane transfer of potassium across the cell membrane through a constitutive interaction with calmodulin which binds the intracellular calcium allowing its opening. The current is characterized by a voltage-independent activation, an intracellular calcium concentration increase-dependent activation and a single-channel conductance of about 3 picosiemens. Also presents an inwardly rectifying current, thus reducing its already small outward conductance of potassium ions, which is particularly the case when the membrane potential displays positive values, above + 20 mV. Activation is followed by membrane hyperpolarization. Thought to regulate neuronal excitability by contributing to the slow component of synaptic afterhyperpolarization. This Rattus norvegicus (Rat) protein is Small conductance calcium-activated potassium channel protein 1.